The chain runs to 126 residues: Glycine cleavage system H protein (126 aa).

Residues 19–100 (DGKIGITDHA…AHAAWMVKVE (82 aa)) form the Lipoyl-binding domain. An N6-lipoyllysine modification is found at Lys-60.

Belongs to the GcvH family. The glycine cleavage system is composed of four proteins: P, T, L and H. (R)-lipoate is required as a cofactor.

Its function is as follows. The glycine cleavage system catalyzes the degradation of glycine. The H protein shuttles the methylamine group of glycine from the P protein to the T protein. The chain is Glycine cleavage system H protein from Koribacter versatilis (strain Ellin345).